Reading from the N-terminus, the 130-residue chain is Small ribosomal subunit protein uS11 (130 aa).

Belongs to the universal ribosomal protein uS11 family. In terms of assembly, part of the 30S ribosomal subunit. Interacts with proteins S7 and S18. Binds to IF-3.

In terms of biological role, located on the platform of the 30S subunit, it bridges several disparate RNA helices of the 16S rRNA. Forms part of the Shine-Dalgarno cleft in the 70S ribosome. The protein is Small ribosomal subunit protein uS11 of Prochlorococcus marinus (strain NATL2A).